We begin with the raw amino-acid sequence, 138 residues long: PTS system sorbose-specific EIIA component (138 aa).

The PTS EIIA type-4 domain occupies 1 to 125; that stretch reads MEIILVGHAH…KIKEEFSTSL (125 aa). His8 serves as the catalytic Tele-phosphohistidine intermediate. His8 is modified (phosphohistidine; by HPr).

It is found in the cytoplasm. The phosphoenolpyruvate-dependent sugar phosphotransferase system (PTS), a major carbohydrate active transport system, catalyzes the phosphorylation of incoming sugar substrates concomitant with their translocation across the cell membrane. The enzyme II SorABCD PTS system is involved in L-sorbose transport. In Lacticaseibacillus casei (Lactobacillus casei), this protein is PTS system sorbose-specific EIIA component.